Reading from the N-terminus, the 210-residue chain is Glutathione S-transferase P (210 aa).

The GST N-terminal domain maps to proline 2–glycine 81. A Phosphotyrosine; by EGFR modification is found at tyrosine 4. Glutathione-binding positions include tyrosine 8, arginine 14, tryptophan 39, lysine 45, and glutamine 52–leucine 53. Threonine 62 carries the post-translational modification Phosphothreonine. Glutamine 65–serine 66 is a binding site for glutathione. The 122-residue stretch at aspartate 83–isoleucine 204 folds into the GST C-terminal domain. Lysine 103 and lysine 116 each carry N6-succinyllysine. The residue at position 128 (lysine 128) is an N6-acetyllysine.

This sequence belongs to the GST superfamily. Pi family. In terms of assembly, homodimer. Interacts with CDK5.

It localises to the cytoplasm. It is found in the mitochondrion. Its subcellular location is the nucleus. The enzyme catalyses RX + glutathione = an S-substituted glutathione + a halide anion + H(+). The catalysed reaction is prostaglandin J2 + glutathione = prostaglandin J2-S-(R)-glutathione. It carries out the reaction prostaglandin J2 + glutathione = prostaglandin J2-S-(S)-glutathione. It catalyses the reaction prostaglandin A2 + glutathione = prostaglandin A2-S-(S)-glutathione. The enzyme catalyses 11(S)-hydroxy-14(S),15(S)-epoxy-(5Z,8Z,12E)-eicosatrienoate + glutathione = (11S,15S)-dihydroxy-14(R)-S-glutathionyl-(5Z,8Z,12E)-eicosatrienoate. Functionally, conjugation of reduced glutathione to a wide number of exogenous and endogenous hydrophobic electrophiles. Involved in the formation of glutathione conjugates of both prostaglandin A2 (PGA2) and prostaglandin J2 (PGJ2). Participates in the formation of novel hepoxilin regioisomers. Negatively regulates CDK5 activity via p25/p35 translocation to prevent neurodegeneration. The protein is Glutathione S-transferase P (GSTP1) of Macaca mulatta (Rhesus macaque).